A 319-amino-acid polypeptide reads, in one-letter code: Phosphate acyltransferase (319 aa).

Belongs to the PlsX family. As to quaternary structure, homodimer. Probably interacts with PlsY.

It localises to the cytoplasm. It carries out the reaction a fatty acyl-[ACP] + phosphate = an acyl phosphate + holo-[ACP]. It participates in lipid metabolism; phospholipid metabolism. Its function is as follows. Catalyzes the reversible formation of acyl-phosphate (acyl-PO(4)) from acyl-[acyl-carrier-protein] (acyl-ACP). This enzyme utilizes acyl-ACP as fatty acyl donor, but not acyl-CoA. This chain is Phosphate acyltransferase, found in Chlamydia muridarum (strain MoPn / Nigg).